The chain runs to 101 residues: MGGAYITSRYWLVPAHVTSRLRLTSFTGHRGVARVDGPMSSLGLNIIKCAVNGGMDMTGKMSSSWTIFMGGYLIARCSASATVIHIKCQSRALLWSLPARG.

This is an uncharacterized protein from Gracula (BFDV).